The sequence spans 127 residues: Small ribosomal subunit protein bS6 (127 aa).

The tract at residues 99–127 (PSPMMKEEKSKSMMPGDAAPAAPAETAAA) is disordered. The span at 110–127 (SMMPGDAAPAAPAETAAA) shows a compositional bias: low complexity.

This sequence belongs to the bacterial ribosomal protein bS6 family.

Its function is as follows. Binds together with bS18 to 16S ribosomal RNA. The protein is Small ribosomal subunit protein bS6 of Dechloromonas aromatica (strain RCB).